A 483-amino-acid chain; its full sequence is Regulatory protein ViaA (483 aa).

It belongs to the ViaA family. As to quaternary structure, homodimer. Interacts with RavA.

The protein localises to the cytoplasm. In terms of biological role, component of the RavA-ViaA chaperone complex, which may act on the membrane to optimize the function of some of the respiratory chains. ViaA stimulates the ATPase activity of RavA. This Salmonella heidelberg (strain SL476) protein is Regulatory protein ViaA.